The following is a 326-amino-acid chain: Acetyl-coenzyme A carboxylase carboxyl transferase subunit beta (326 aa).

The CoA carboxyltransferase N-terminal domain maps to 32-301; that stretch reads LWTKCPACGV…ILPPLNADSN (270 aa). Residues C36, C39, C55, and C58 each coordinate Zn(2+). Residues 36 to 58 form a C4-type zinc finger; that stretch reads CPACGVLTYTKDLQGNWMVCVEC.

The protein belongs to the AccD/PCCB family. In terms of assembly, acetyl-CoA carboxylase is a heterohexamer composed of biotin carboxyl carrier protein (AccB), biotin carboxylase (AccC) and two subunits each of ACCase subunit alpha (AccA) and ACCase subunit beta (AccD). It depends on Zn(2+) as a cofactor.

The protein resides in the cytoplasm. It carries out the reaction N(6)-carboxybiotinyl-L-lysyl-[protein] + acetyl-CoA = N(6)-biotinyl-L-lysyl-[protein] + malonyl-CoA. It functions in the pathway lipid metabolism; malonyl-CoA biosynthesis; malonyl-CoA from acetyl-CoA: step 1/1. In terms of biological role, component of the acetyl coenzyme A carboxylase (ACC) complex. Biotin carboxylase (BC) catalyzes the carboxylation of biotin on its carrier protein (BCCP) and then the CO(2) group is transferred by the transcarboxylase to acetyl-CoA to form malonyl-CoA. This chain is Acetyl-coenzyme A carboxylase carboxyl transferase subunit beta, found in Synechocystis sp. (strain ATCC 27184 / PCC 6803 / Kazusa).